The following is a 124-amino-acid chain: Large ribosomal subunit protein bL21 (124 aa).

Residues 105 to 124 (NAPSIGPRVRKAKPAAEAAE) are disordered.

The protein belongs to the bacterial ribosomal protein bL21 family. Part of the 50S ribosomal subunit. Contacts protein L20.

Functionally, this protein binds to 23S rRNA in the presence of protein L20. This is Large ribosomal subunit protein bL21 from Rhodopseudomonas palustris (strain BisA53).